The sequence spans 712 residues: MTTQITYFATAARGFEEMLKTELEQICQAECKVAQGGVHFTTTQRGAYQALLHSRLASRILLPLVTTKIFSDLDLYATIVGINWAEIFDPRDTFFVDFNGTNREIRNTQFGAMRVKDGVVDYFERKGFARPTVDKDHADIRIHVYLDRENMVVSLDLSGDALHMRGYREDTGKAPLRETLAAAIILRSGWQKGTPLVDPMCGSGTLLIEAAQMQAGIAPQLHRKHWGFNAWKGHQQAVWKEVLEQAYLQQNEEIQPLFFGFDLDHRVLAKAKQNARNAGVAHLIQWQQGDVAALKNPCPEQVGTVICNPPYGERLGTTPALIALYSVFGQRLKHQFSGWNASIFSGEPELLNCLRLRSHRQFKAKNGPLDCLQKNYQISERAVAEQQADELKFEQNAQVAPDFANRLTKNIKKIEKWAKQQGINAYRLYDADLPEYNLAVDRYDDHIVVQEYAAPKNIDEQKARQRLLDAVSATLYVTGVETNKLVLKVRQKQKGTNQYEKLANKGDYFYVTEYGAKLWVNLTDYLDTGLFLDHRLTRKMVGQMAKGKTFLNLFAYTGSATIHAALNGAKSTTTIDMSNTYLNWAEQNLELNNLPLRNNRLFQADCLQWLAECRERFELIFVDPPTFSNSKRMEDSWDVQRDHIKLMTQLKRILTADGIIVFSNNKRGFKMDFEGLAELGLQAENISHKTLPLDFERNPQIHNCWIIRHIEN.

Residues 46-157 (GAYQALLHSR…RENMVVSLDL (112 aa)) form the THUMP domain.

The protein belongs to the methyltransferase superfamily. RlmKL family.

The protein resides in the cytoplasm. It catalyses the reaction guanosine(2445) in 23S rRNA + S-adenosyl-L-methionine = N(2)-methylguanosine(2445) in 23S rRNA + S-adenosyl-L-homocysteine + H(+). The catalysed reaction is guanosine(2069) in 23S rRNA + S-adenosyl-L-methionine = N(2)-methylguanosine(2069) in 23S rRNA + S-adenosyl-L-homocysteine + H(+). In terms of biological role, specifically methylates the guanine in position 2445 (m2G2445) and the guanine in position 2069 (m7G2069) of 23S rRNA. The chain is Ribosomal RNA large subunit methyltransferase K/L from Actinobacillus pleuropneumoniae serotype 7 (strain AP76).